A 379-amino-acid chain; its full sequence is MTSVAKVYYSQTTQTESRPLVAPGIRRRRVLTKDGRSNVRMEHIADKRFLYLKDLWTTFIDMQWRYKLLLFSATFAGTWFLFGVVWYLVAVAHGDLLELGPPANHTPCVVQVHTLTGAFLFSLESQTTIGYGFRYISEECPLAIVLLIAQLVLTTILEIFITGTFLAKIARPKKRAETIRFSQHAVVAYHNGKLCLMIRVANMRKSLLIGCQVTGKLLQTHQTKEGENIRLNQVNVTFQVDTASDSPFLILPLTFYHVVDETSPLKDLPLRSGEGDFELVLILSGTVESTSATCQVRTSYLPEEILWGYEFTPAISLSASGKYVADFSLFDQVVKVASPGGLRDSTVRYGDPEKLKLEESLREQAEKEGSALSVRISNV.

The Cytoplasmic portion of the chain corresponds to Met-1 to Asp-61. Arg-36 is a binding site for 1,2-dioctanoyl-sn-glycero-3-phospho-(1D-myo-inositol-4,5-bisphosphate). A helical membrane pass occupies residues Met-62 to Leu-88. Over Val-89–Thr-114 the chain is Extracellular. A disulfide bond links Cys-108 and Cys-140. Positions Leu-115 to Tyr-131 form an intramembrane region, discontinuously helical; Pore-forming. Positions Thr-128 to Phe-133 match the Selectivity filter motif. The Extracellular segment spans residues Gly-132 to Cys-140. A helical membrane pass occupies residues Pro-141 to Leu-166. Residues Ala-167–Val-379 are Cytoplasmic-facing. The 1,2-dioctanoyl-sn-glycero-3-phospho-(1D-myo-inositol-4,5-bisphosphate) site is built by Lys-168, Arg-171, and Lys-173. Gly-210–Leu-217 contacts ATP.

The protein belongs to the inward rectifier-type potassium channel (TC 1.A.2.1) family. KCNJ10 subfamily. As to quaternary structure, homotetramer. In kidney cells, it forms heteromeric channels with Kir5.1/KCNJ16; this interaction is required for KCNJ16 localization to the basolateral membrane. Interacts with MAGI1, alone and possibly as a heteromer with KCNJ16; this interaction may facilitate KCNJ10/KCNJ16 potassium channel expression at the basolateral membrane in kidney cells. Interacts with PATJ. In terms of tissue distribution, predominantly expressed in the brain, including in glial cells of the cerebellum and forebrain. Expressed at lower levels in the kidney, and other peripheral tissues.

It localises to the membrane. The protein resides in the basolateral cell membrane. The catalysed reaction is K(+)(in) = K(+)(out). Its activity is regulated as follows. Channel activity is strongly regulated by variations of cytosolic pH; channels are activated by alkaline and inhibited by acidic pH values. Activated by phosphatidylinositol 4,5 biphosphate (PtdIns(4,5)P2). Inhibited by Ba(2+) and Cs(+). May be responsible for potassium buffering action of glial cells in the brain. Inward rectifier potassium channels are characterized by a greater tendency to allow potassium to flow into the cell rather than out of it. Their voltage dependence is regulated by the concentration of extracellular potassium; as external potassium is raised, the voltage range of the channel opening shifts to more positive voltages. The inward rectification is mainly due to the blockage of outward current by internal magnesium. Can be blocked by extracellular barium and cesium. In the kidney, together with KCNJ16, mediates basolateral K(+) recycling in distal tubules; this process is critical for Na(+) reabsorption at the tubules. The chain is ATP-sensitive inward rectifier potassium channel 10 from Rattus norvegicus (Rat).